A 615-amino-acid polypeptide reads, in one-letter code: 1-deoxy-D-xylulose-5-phosphate synthase (615 aa).

Thiamine diphosphate-binding positions include His-76 and Gly-117–Ser-119. Residue Asp-148 coordinates Mg(2+). Residues Gly-149 to Ala-150, Asn-177, Tyr-284, and Glu-365 contribute to the thiamine diphosphate site. Asn-177 lines the Mg(2+) pocket.

The protein belongs to the transketolase family. DXPS subfamily. As to quaternary structure, homodimer. Mg(2+) is required as a cofactor. Thiamine diphosphate serves as cofactor.

It catalyses the reaction D-glyceraldehyde 3-phosphate + pyruvate + H(+) = 1-deoxy-D-xylulose 5-phosphate + CO2. Its pathway is metabolic intermediate biosynthesis; 1-deoxy-D-xylulose 5-phosphate biosynthesis; 1-deoxy-D-xylulose 5-phosphate from D-glyceraldehyde 3-phosphate and pyruvate: step 1/1. Its function is as follows. Catalyzes the acyloin condensation reaction between C atoms 2 and 3 of pyruvate and glyceraldehyde 3-phosphate to yield 1-deoxy-D-xylulose-5-phosphate (DXP). This chain is 1-deoxy-D-xylulose-5-phosphate synthase, found in Francisella tularensis subsp. tularensis (strain FSC 198).